The sequence spans 344 residues: S-methyl-5'-thioadenosine phosphorylase (344 aa).

Residues threonine 45, 88–89 (RH), and 121–122 (SA) each bind phosphate. A substrate-binding site is contributed by methionine 238. Serine 239 contributes to the phosphate binding site. Residue 262-264 (DYD) coordinates substrate.

The protein belongs to the PNP/MTAP phosphorylase family. MTAP subfamily. As to quaternary structure, homotrimer.

It is found in the cytoplasm. The protein resides in the nucleus. It carries out the reaction S-methyl-5'-thioadenosine + phosphate = 5-(methylsulfanyl)-alpha-D-ribose 1-phosphate + adenine. The protein operates within amino-acid biosynthesis; L-methionine biosynthesis via salvage pathway; S-methyl-5-thio-alpha-D-ribose 1-phosphate from S-methyl-5'-thioadenosine (phosphorylase route): step 1/1. In terms of biological role, catalyzes the reversible phosphorylation of S-methyl-5'-thioadenosine (MTA) to adenine and 5-methylthioribose-1-phosphate. Involved in the breakdown of MTA, a major by-product of polyamine biosynthesis. Responsible for the first step in the methionine salvage pathway after MTA has been generated from S-adenosylmethionine. Has broad substrate specificity with 6-aminopurine nucleosides as preferred substrates. This chain is S-methyl-5'-thioadenosine phosphorylase, found in Candida albicans (strain WO-1) (Yeast).